The sequence spans 173 residues: NADH-ubiquinone oxidoreductase chain 6 (173 aa).

The next 6 helical transmembrane spans lie at 1-21, 27-47, 48-68, 87-107, 113-133, and 139-159; these read MTYF…AVAS, YGVV…LSLG, VSFV…VVFV, VVGY…VGGF, FGVV…FSGV, and CGVG…FVVL.

It belongs to the complex I subunit 6 family.

It is found in the mitochondrion membrane. The enzyme catalyses a ubiquinone + NADH + 5 H(+)(in) = a ubiquinol + NAD(+) + 4 H(+)(out). Its function is as follows. Core subunit of the mitochondrial membrane respiratory chain NADH dehydrogenase (Complex I) that is believed to belong to the minimal assembly required for catalysis. Complex I functions in the transfer of electrons from NADH to the respiratory chain. The immediate electron acceptor for the enzyme is believed to be ubiquinone. This Cepphus grylle (Black guillemot) protein is NADH-ubiquinone oxidoreductase chain 6 (MT-ND6).